The chain runs to 561 residues: Asparagine synthetase [glutamine-hydrolyzing] (561 aa).

The For GATase activity role is filled by cysteine 2. In terms of domain architecture, Glutamine amidotransferase type-2 spans 2–191; it reads CGIWALFGSD…PGHYEVLDLK (190 aa). L-glutamine contacts are provided by residues 49-53, 75-77, and aspartate 97; these read RLAVV and NGE. Positions 213 to 536 constitute an Asparagine synthetase domain; sequence HAIYDSVEKL…PGRADWLTHY (324 aa). ATP contacts are provided by residues leucine 256, isoleucine 288, and 363–364; that span reads SG. Lysine 385 is modified (N6-acetyllysine). Threonine 545 is subject to Phosphothreonine. Serine 557 carries the phosphoserine modification.

It catalyses the reaction L-aspartate + L-glutamine + ATP + H2O = L-asparagine + L-glutamate + AMP + diphosphate + H(+). It functions in the pathway amino-acid biosynthesis; L-asparagine biosynthesis; L-asparagine from L-aspartate (L-Gln route): step 1/1. The chain is Asparagine synthetase [glutamine-hydrolyzing] (Asns) from Mus musculus (Mouse).